The sequence spans 388 residues: Probable proton-coupled zinc antiporter SLC30A3 (388 aa).

Residues Met-1–Leu-41 are disordered. At Met-1–Gln-75 the chain is on the cytoplasmic side. 2 positions are modified to phosphoserine: Ser-63 and Ser-66. A helical transmembrane segment spans residues Leu-76 to Leu-96. Topologically, residues Ala-97–Asp-105 are lumenal. Residues Ala-106–Ser-126 traverse the membrane as a helical segment. Positions 108 and 112 each coordinate Zn(2+). Residues Thr-127–Gly-145 are Cytoplasmic-facing. Residues Ala-146–Leu-166 form a helical membrane-spanning segment. Topologically, residues Arg-167 to Ala-177 are lumenal. The chain crosses the membrane as a helical span at residues Gly-178 to Leu-198. At His-199–Ala-235 the chain is on the cytoplasmic side. Residues Phe-236 to Ile-256 form a helical membrane-spanning segment. Zn(2+) is bound by residues His-238 and Asp-242. The Lumenal portion of the chain corresponds to Tyr-257–Lys-263. Residues Val-264–Thr-284 traverse the membrane as a helical segment. Topologically, residues Leu-285–Ala-388 are cytoplasmic.

It belongs to the cation diffusion facilitator (CDF) transporter (TC 2.A.4) family. SLC30A subfamily. As to quaternary structure, homodimer. Homodimerization is negligible compared to the human protein. It could explain the lower efficiency of zinc transport. Interacts with TMEM163. Expression is restricted to brain (at protein level). In the brain, most abundant in hippocampus and cerebral cortex. The mRNA is also detected in testis, expression being restricted to germ cells and highest in pachytene spermatocytes and round spermatids.

It localises to the cytoplasmic vesicle. The protein resides in the secretory vesicle. Its subcellular location is the synaptic vesicle membrane. It is found in the synapse. The protein localises to the synaptosome. It localises to the late endosome membrane. The protein resides in the lysosome membrane. The enzyme catalyses Zn(2+)(in) + 2 H(+)(out) = Zn(2+)(out) + 2 H(+)(in). Probable proton-coupled zinc ion antiporter mediating the import of zinc from cytoplasm into synaptic vesicles and participating to cellular zinc ion homeostasis in the brain. The polypeptide is Probable proton-coupled zinc antiporter SLC30A3 (Mus musculus (Mouse)).